A 400-amino-acid polypeptide reads, in one-letter code: Ribose-phosphate pyrophosphokinase 2, chloroplastic (400 aa).

The N-terminal 44 residues, 1-44 (MASLALTSPPSVKIPSYLSSSSSSLFSRSSISFRTTESRSRICV), are a transit peptide targeting the chloroplast. Mg(2+) contacts are provided by Asp-214, His-216, Asp-225, and Asp-229. Residues 300-315 (GKVAVMVDDIIDTAGT) form a binding of phosphoribosylpyrophosphate region.

The protein belongs to the ribose-phosphate pyrophosphokinase family.

It is found in the plastid. The protein resides in the chloroplast. The catalysed reaction is D-ribose 5-phosphate + ATP = 5-phospho-alpha-D-ribose 1-diphosphate + AMP + H(+). The sequence is that of Ribose-phosphate pyrophosphokinase 2, chloroplastic (PRS2) from Arabidopsis thaliana (Mouse-ear cress).